The following is a 209-amino-acid chain: Small ribosomal subunit protein uS4 (209 aa).

The tract at residues 23-46 (SRNPLLKKPHPPGQHGMQRKKKSD) is disordered. The 64-residue stretch at 93-156 (CRLDNMVYRM…RKLQSVQESL (64 aa)) folds into the S4 RNA-binding domain.

Belongs to the universal ribosomal protein uS4 family. Part of the 30S ribosomal subunit. Contacts protein S5. The interaction surface between S4 and S5 is involved in control of translational fidelity.

In terms of biological role, one of the primary rRNA binding proteins, it binds directly to 16S rRNA where it nucleates assembly of the body of the 30S subunit. With S5 and S12 plays an important role in translational accuracy. The polypeptide is Small ribosomal subunit protein uS4 (Chlamydia felis (strain Fe/C-56) (Chlamydophila felis)).